Here is a 487-residue protein sequence, read N- to C-terminus: MDKGQHFVFFVLTTVLLLRESSHAGAMRNDAAASKDTDLRGPEENLPTLTVTTILEDPYVMVRRAELEGYCIDLLKALASMLHFSYKVKVVGDGKYGAVSSNGNWTGMIGEILRQEADIAVAPLTVTSAREEVVSFTTPFLQTGIGILLRKDTMSQEMSFFHFLAPFSKETWTGLLFAYILTCFCLFLVARLSPCEWNEPKNEENHFTFLNSLWFGAGALALQGVTPRPKALSVRVIAAIWWLFTIALLAAYIANFTALLSSGSEQLPIQTFEDLVKQRKLEFGTLDGSSTFYYFKNSKNPIHQMIYEYMDKRRDHVLVKTYQEAVQRVMDSNYAFIGESISQDLAAARHCNLIRAPEVIGARGFGIATAQASPWTKKLSIAVLKLRESGDLDYLRNKWWETSCLHKSRERWSPLQPQALGGLFLTLAIGLALGVIAAVVELSNKSRHAAGHVKKSCCSIFTEEMCTRLRIKENTRQSQETSGRANA.

The first 23 residues, Met-1 to His-23, serve as a signal peptide directing secretion. Residues Ala-24 to Lys-169 lie on the Extracellular side of the membrane. N-linked (GlcNAc...) asparagine glycosylation is present at Asn-104. A helical transmembrane segment spans residues Glu-170–Ala-190. Residues Arg-191 to Arg-235 are Cytoplasmic-facing. Residues Val-236–Phe-256 form a helical membrane-spanning segment. Over Thr-257–Ala-419 the chain is Extracellular. The chain crosses the membrane as a helical span at residues Leu-420–Val-440. Residues Glu-441–Ala-487 are Cytoplasmic-facing.

It belongs to the glutamate-gated ion channel (TC 1.A.10.1) family.

Its subcellular location is the cell membrane. It is found in the postsynaptic cell membrane. In terms of biological role, receptor for glutamate. L-glutamate acts as an excitatory neurotransmitter at many synapses in the central nervous system. The postsynaptic actions of Glu are mediated by a variety of receptors that are named according to their selective agonists. This Anas platyrhynchos (Mallard) protein is Probable glutamate receptor (KBP).